Consider the following 254-residue polypeptide: Acetyl-coenzyme A carboxylase carboxyl transferase subunit beta (254 aa).

A CoA carboxyltransferase N-terminal domain is found at M1 to E254. Zn(2+)-binding residues include C5, C8, C23, and C26. The C4-type zinc finger occupies C5–C26.

This sequence belongs to the AccD/PCCB family. Acetyl-CoA carboxylase is a heterohexamer composed of biotin carboxyl carrier protein (AccB), biotin carboxylase (AccC) and two subunits each of ACCase subunit alpha (AccA) and ACCase subunit beta (AccD). Zn(2+) serves as cofactor.

The protein localises to the cytoplasm. The catalysed reaction is N(6)-carboxybiotinyl-L-lysyl-[protein] + acetyl-CoA = N(6)-biotinyl-L-lysyl-[protein] + malonyl-CoA. It functions in the pathway lipid metabolism; malonyl-CoA biosynthesis; malonyl-CoA from acetyl-CoA: step 1/1. Component of the acetyl coenzyme A carboxylase (ACC) complex. Biotin carboxylase (BC) catalyzes the carboxylation of biotin on its carrier protein (BCCP) and then the CO(2) group is transferred by the transcarboxylase to acetyl-CoA to form malonyl-CoA. This is Acetyl-coenzyme A carboxylase carboxyl transferase subunit beta from Limosilactobacillus reuteri (strain DSM 20016) (Lactobacillus reuteri).